The sequence spans 405 residues: Molybdopterin molybdenumtransferase 2 (405 aa).

Belongs to the MoeA family. Requires Mg(2+) as cofactor.

The enzyme catalyses adenylyl-molybdopterin + molybdate = Mo-molybdopterin + AMP + H(+). It functions in the pathway cofactor biosynthesis; molybdopterin biosynthesis. Catalyzes the insertion of molybdate into adenylated molybdopterin with the concomitant release of AMP. In Mycobacterium tuberculosis (strain CDC 1551 / Oshkosh), this protein is Molybdopterin molybdenumtransferase 2 (moaE2).